We begin with the raw amino-acid sequence, 660 residues long: Galactocerebrosidase (660 aa).

Residues 1 to 18 form the signal peptide; that stretch reads MQTHNFLCIISVILGCSA. Thr87 and Trp129 together coordinate substrate. The N-linked (GlcNAc...) asparagine glycan is linked to Asn147. Residue Asn175 coordinates substrate. Glu176 functions as the Proton donor/acceptor in the catalytic mechanism. The Nucleophile role is filled by Glu251. Cys264 and Cys371 form a disulfide bridge. Asn293 and Asn356 each carry an N-linked (GlcNAc...) asparagine glycan. Residue Arg373 coordinates substrate. Asn413, Asn465, Asn495, Asn499, Asn537, and Asn578 each carry an N-linked (GlcNAc...) asparagine glycan.

This sequence belongs to the glycosyl hydrolase 59 family.

It localises to the lysosome. The catalysed reaction is a beta-D-galactosyl-(1&lt;-&gt;1')-N-acylsphing-4-enine + H2O = an N-acylsphing-4-enine + D-galactose. The enzyme catalyses beta-D-galactosyl-(1&lt;-&gt;1)-sphing-4-enine + H2O = sphing-4-enine + D-galactose. It carries out the reaction a D-galactosylceramide + H2O = an N-acyl-sphingoid base + D-galactose. Its function is as follows. Hydrolyzes the galactose ester bonds of glycolipids such as galactosylceramide and galactosylsphingosine. This Danio rerio (Zebrafish) protein is Galactocerebrosidase.